The sequence spans 210 residues: Insulin receptor (210 aa).

The 96-residue stretch at 1 to 96 (VSNSSSQIIL…SQILKELEES (96 aa)) folds into the Fibronectin type-III domain. N-linked (GlcNAc...) asparagine glycosylation is found at N3, N21, and N68. Residues 55 to 78 (WSPPFESEDSQKHNQSEYEDSAGE) form a disordered region. The segment at 103–111 (EDYLHNVVF) is insulin-binding. Positions 116-169 (TSSGTGAEDPRPSRKRRSLGDVGNVTVAVPTVAAFPNTSSTSTPTSPEEHRPFE) are disordered. Over 133–210 (SLGDVGNVTV…EERCSVAAYV (78 aa)) the chain is Extracellular. Residues 137–161 (VGNVTVAVPTVAAFPNTSSTSTPTS) are compositionally biased toward low complexity. N-linked (GlcNAc...) asparagine glycosylation is found at N139 and N152. A disulfide bridge connects residues C195 and C204.

This sequence belongs to the protein kinase superfamily. Tyr protein kinase family. Insulin receptor subfamily. As to quaternary structure, tetramer of 2 alpha and 2 beta chains linked by disulfide bonds. The alpha chains carry the insulin-binding regions, while the beta chains carry the kinase domain. Forms a hybrid receptor with IGF1R, the hybrid is a tetramer consisting of 1 alpha chain and 1 beta chain of INSR and 1 alpha chain and 1 beta chain of IGF1R. Interacts with SORBS1 but dissociates from it following insulin stimulation. Binds SH2B2. Activated form of INSR interacts (via phosphorylated Tyrosine) with the PTB/PID domains of IRS1 and SHC1. The sequences surrounding the phosphorylated NPXY motif contribute differentially to either IRS1 or SHC1 recognition. Interacts (via tyrosines in the C-terminus) with IRS2 (via PTB domain and 591-786 AA); the 591-786 would be the primary anchor of IRS2 to INSR while the PTB domain would have a stabilizing action on the interaction with INSR. Interacts with the SH2 domains of the 85 kDa regulatory subunit of PI3K (PIK3R1) in vitro, when autophosphorylated on tyrosine residues. Interacts with SOCS7. Interacts with SOCS3. Interacts with SOCS1. Interacts with CAV2 (tyrosine-phosphorylated form); the interaction is increased with 'Tyr-27'phosphorylation of CAV2. Interacts with ARRB2. Interacts with GRB10; this interaction blocks the association between IRS1/IRS2 and INSR, significantly reduces insulin-stimulated tyrosine phosphorylation of IRS1 and IRS2 and thus decreases insulin signaling. Interacts with GRB7. Interacts with PDPK1. Interacts with GRB14 (via BPS domain). Interacts (via subunit alpha) with ENPP1 (via 485-599 AA); this interaction blocks autophosphorylation. Interacts with PTPRE. Interacts with STAT5B (via SH2 domain). Interacts with PTPRF. Interacts with ATIC; ATIC together with PRKAA2/AMPK2 and HACD3/PTPLAD1 is proposed to be part of a signaling netwok regulating INSR autophosphorylation and endocytosis. Interacts with the insulin receptor SORL1; this interaction strongly increases its surface exposure, hence strengthens insulin signal reception. Interacts (tyrosine phosphorylated) with CCDC88A/GIV (via SH2-like region); binding requires autophosphorylation of the INSR C-terminal region. Interacts with GNAI3; the interaction is probably mediated by CCDC88A/GIV. Interacts with LMBRD1. Interacts (in response to insulin stimulation) with NCK1; this interaction may recruit PTPN1 to mediate INSR dephosphorylation. Post-translationally, after being transported from the endoplasmic reticulum to the Golgi apparatus, the single glycosylated precursor is further glycosylated and then cleaved, followed by its transport to the plasma membrane. In terms of processing, autophosphorylated on tyrosine residues in response to insulin. Dephosphorylated by PTPN1, PTPRE and PTPRF. Dephosphorylated by PTPN2; down-regulates insulin-induced signaling. S-nitrosylation by BLVRB inhibits the receptor tyrosine kinase, thereby inhibiting insulin signaling.

It is found in the cell membrane. The protein resides in the late endosome. Its subcellular location is the lysosome. The catalysed reaction is L-tyrosyl-[protein] + ATP = O-phospho-L-tyrosyl-[protein] + ADP + H(+). Its activity is regulated as follows. Activated in response to insulin. Autophosphorylation activates the kinase activity. PTPN1, PTPRE and PTPRF dephosphorylate important tyrosine residues, thereby reducing INSR activity. Inhibited by ENPP1. GRB10 and GRB14 inhibit the catalytic activity of the INSR, they block access of substrates to the activated receptor. SOCS1 and SOCS3 act as negative regulators of INSR activity, they bind to the activated INRS and interfere with the phosphorylation of INSR substrates. Functionally, receptor tyrosine kinase which mediates the pleiotropic actions of insulin. Binding of insulin leads to phosphorylation of several intracellular substrates, including, insulin receptor substrates (IRS1, 2, 3, 4), SHC, GAB1, CBL and other signaling intermediates. Each of these phosphorylated proteins serve as docking proteins for other signaling proteins that contain Src-homology-2 domains (SH2 domain) that specifically recognize different phosphotyrosine residues, including the p85 regulatory subunit of PI3K and SHP2. Phosphorylation of IRSs proteins lead to the activation of two main signaling pathways: the PI3K-AKT/PKB pathway, which is responsible for most of the metabolic actions of insulin, and the Ras-MAPK pathway, which regulates expression of some genes and cooperates with the PI3K pathway to control cell growth and differentiation. Binding of the SH2 domains of PI3K to phosphotyrosines on IRS1 leads to the activation of PI3K and the generation of phosphatidylinositol-(3, 4, 5)-triphosphate (PIP3), a lipid second messenger, which activates several PIP3-dependent serine/threonine kinases, such as PDPK1 and subsequently AKT/PKB. The net effect of this pathway is to produce a translocation of the glucose transporter SLC2A4/GLUT4 from cytoplasmic vesicles to the cell membrane to facilitate glucose transport. Moreover, upon insulin stimulation, activated AKT/PKB is responsible for: anti-apoptotic effect of insulin by inducing phosphorylation of BAD; regulates the expression of gluconeogenic and lipogenic enzymes by controlling the activity of the winged helix or forkhead (FOX) class of transcription factors. Another pathway regulated by PI3K-AKT/PKB activation is mTORC1 signaling pathway which regulates cell growth and metabolism and integrates signals from insulin. AKT mediates insulin-stimulated protein synthesis by phosphorylating TSC2 thereby activating mTORC1 pathway. The Ras/RAF/MAP2K/MAPK pathway is mainly involved in mediating cell growth, survival and cellular differentiation of insulin. Phosphorylated IRS1 recruits GRB2/SOS complex, which triggers the activation of the Ras/RAF/MAP2K/MAPK pathway. In addition to binding insulin, the insulin receptor can bind insulin-like growth factors (IGFI and IGFII). When present in a hybrid receptor with IGF1R, binds IGF1. In adipocytes, inhibits lipolysis. The protein is Insulin receptor (INSR) of Macaca mulatta (Rhesus macaque).